The sequence spans 554 residues: Glucose-6-phosphate isomerase (554 aa).

Glutamate 359 serves as the catalytic Proton donor. Residues histidine 390 and lysine 518 contribute to the active site.

It belongs to the GPI family.

It is found in the cytoplasm. It carries out the reaction alpha-D-glucose 6-phosphate = beta-D-fructose 6-phosphate. The protein operates within carbohydrate biosynthesis; gluconeogenesis. It functions in the pathway carbohydrate degradation; glycolysis; D-glyceraldehyde 3-phosphate and glycerone phosphate from D-glucose: step 2/4. Its function is as follows. Catalyzes the reversible isomerization of glucose-6-phosphate to fructose-6-phosphate. This Pseudomonas aeruginosa (strain LESB58) protein is Glucose-6-phosphate isomerase.